The primary structure comprises 277 residues: Sarcosine/dimethylglycine N-methyltransferase (277 aa).

The protein belongs to the methyltransferase superfamily. Monomer.

It carries out the reaction sarcosine + 2 S-adenosyl-L-methionine = glycine betaine + 2 S-adenosyl-L-homocysteine + 2 H(+). The enzyme catalyses sarcosine + S-adenosyl-L-methionine = N,N-dimethylglycine + S-adenosyl-L-homocysteine + H(+). The catalysed reaction is N,N-dimethylglycine + S-adenosyl-L-methionine = glycine betaine + S-adenosyl-L-homocysteine + H(+). It participates in amine and polyamine biosynthesis; betaine biosynthesis via glycine pathway; betaine from glycine: step 2/3. Its pathway is amine and polyamine biosynthesis; betaine biosynthesis via glycine pathway; betaine from glycine: step 3/3. With respect to regulation, inhibited by n-butylic acid and S-adenosyl-L-homocysteine. Catalyzes the methylation of sarcosine and dimethylglycine to dimethylglycine and betaine, respectively, with S-adenosylmethionine (AdoMet) acting as the methyl donor. Activity with sarcosine is much weaker than activity with dimethylglycine. The protein is Sarcosine/dimethylglycine N-methyltransferase of Aphanothece halophytica.